A 425-amino-acid chain; its full sequence is Glutamyl-tRNA reductase (425 aa).

Residues 49-52, Ser107, 112-114, and Gln118 contribute to the substrate site; these read TCNR and EPQ. The active-site Nucleophile is Cys50. NADP(+) is bound at residue 187-192; that stretch reads GAGETI.

This sequence belongs to the glutamyl-tRNA reductase family. Homodimer.

The enzyme catalyses (S)-4-amino-5-oxopentanoate + tRNA(Glu) + NADP(+) = L-glutamyl-tRNA(Glu) + NADPH + H(+). It participates in porphyrin-containing compound metabolism; protoporphyrin-IX biosynthesis; 5-aminolevulinate from L-glutamyl-tRNA(Glu): step 1/2. Its function is as follows. Catalyzes the NADPH-dependent reduction of glutamyl-tRNA(Glu) to glutamate 1-semialdehyde (GSA). This chain is Glutamyl-tRNA reductase, found in Pseudomonas syringae pv. syringae (strain B728a).